We begin with the raw amino-acid sequence, 479 residues long: Probable cytosol aminopeptidase (479 aa).

The Mn(2+) site is built by Lys251 and Asp256. Residue Lys263 is part of the active site. 3 residues coordinate Mn(2+): Asp274, Asp333, and Glu335. The active site involves Arg337.

Belongs to the peptidase M17 family. The cofactor is Mn(2+).

The protein resides in the cytoplasm. The enzyme catalyses Release of an N-terminal amino acid, Xaa-|-Yaa-, in which Xaa is preferably Leu, but may be other amino acids including Pro although not Arg or Lys, and Yaa may be Pro. Amino acid amides and methyl esters are also readily hydrolyzed, but rates on arylamides are exceedingly low.. It catalyses the reaction Release of an N-terminal amino acid, preferentially leucine, but not glutamic or aspartic acids.. Presumably involved in the processing and regular turnover of intracellular proteins. Catalyzes the removal of unsubstituted N-terminal amino acids from various peptides. The chain is Probable cytosol aminopeptidase from Albidiferax ferrireducens (strain ATCC BAA-621 / DSM 15236 / T118) (Rhodoferax ferrireducens).